A 249-amino-acid polypeptide reads, in one-letter code: Exosome complex component Rrp4 (249 aa).

The region spanning 73 to 144 (NDIVIGLVED…RSIDPVLSVK (72 aa)) is the S1 motif domain. In terms of domain architecture, KH spans 154–211 (GIVIDIMPVKVPRVIGKNKSMYETLTSKSGCSIFVANNGRIWATCPSRFSEEILIEAI).

This sequence belongs to the RRP4 family. Component of the archaeal exosome complex. Forms a trimer of Rrp4 and/or Csl4 subunits. The trimer associates with a hexameric ring-like arrangement composed of 3 Rrp41-Rrp42 heterodimers.

Its subcellular location is the cytoplasm. In terms of biological role, non-catalytic component of the exosome, which is a complex involved in RNA degradation. Increases the RNA binding and the efficiency of RNA degradation. Confers strong poly(A) specificity to the exosome. The protein is Exosome complex component Rrp4 of Saccharolobus solfataricus (strain ATCC 35092 / DSM 1617 / JCM 11322 / P2) (Sulfolobus solfataricus).